Here is a 215-residue protein sequence, read N- to C-terminus: Protein ERP2 (215 aa).

The signal sequence occupies residues 1-25 (MIKSTIALPSFFIVLILALVNSVAA). Residues 26-182 (SSSYAPVAIS…TVNSTESRLT (157 aa)) lie on the Lumenal side of the membrane. A GOLD domain is found at 41-123 (KECLYYDMVT…LKKVEITLEK (83 aa)). The helical transmembrane segment at 183 to 203 (WLSILIIIIIAVISIAQVLLI) threads the bilayer. The Cytoplasmic portion of the chain corresponds to 204–215 (QFLFTGRQKNYV).

Belongs to the EMP24/GP25L family. In terms of assembly, associates with EMP24, ERV25 and ERP1.

Its subcellular location is the endoplasmic reticulum membrane. Involved in vesicular protein trafficking. This is Protein ERP2 (ERP2) from Saccharomyces cerevisiae (strain ATCC 204508 / S288c) (Baker's yeast).